The chain runs to 245 residues: Large ribosomal subunit protein uL2 (245 aa).

The disordered stretch occupies residues 196 to 226; it reads SPYAHPHGGGSHQKGGTPVSKTAPPGQKVGF.

The protein belongs to the universal ribosomal protein uL2 family. Part of the 50S ribosomal subunit. Forms a bridge to the 30S subunit in the 70S ribosome.

Its function is as follows. One of the primary rRNA binding proteins. Required for association of the 30S and 50S subunits to form the 70S ribosome, for tRNA binding and peptide bond formation. It has been suggested to have peptidyltransferase activity; this is somewhat controversial. Makes several contacts with the 16S rRNA in the 70S ribosome. The protein is Large ribosomal subunit protein uL2 of Pyrobaculum neutrophilum (strain DSM 2338 / JCM 9278 / NBRC 100436 / V24Sta) (Thermoproteus neutrophilus).